The chain runs to 482 residues: Cardiolipin synthase (482 aa).

2 helical membrane passes run 4-24 (LAYL…VTVF) and 34-54 (WAWL…YLIF). PLD phosphodiesterase domains are found at residues 217–244 (LNYR…GDEY) and 395–422 (DNGF…DFRS). Residues His222, Lys224, Asp229, His400, Lys402, and Asp407 contribute to the active site.

Belongs to the phospholipase D family. Cardiolipin synthase subfamily.

The protein localises to the cell membrane. It carries out the reaction 2 a 1,2-diacyl-sn-glycero-3-phospho-(1'-sn-glycerol) = a cardiolipin + glycerol. Functionally, catalyzes the reversible phosphatidyl group transfer from one phosphatidylglycerol molecule to another to form cardiolipin (CL) (diphosphatidylglycerol) and glycerol. The sequence is that of Cardiolipin synthase (cls) from Listeria monocytogenes serotype 4a (strain HCC23).